The chain runs to 948 residues: Translation initiation factor IF-2 (948 aa).

Disordered stretches follow at residues 61–120, 162–243, and 255–285; these read IQAN…PALI, KSRE…TQSA, and QEKD…SHKI. Residues 68–78 are compositionally biased toward basic and acidic residues; the sequence is KNPEQDNKDDL. The span at 173–189 shows a compositional bias: low complexity; the sequence is SNTNNANSTNNANNVNN. A compositionally biased stretch (basic and acidic residues) spans 190–207; it reads AKKEISEVKKQEQEIKRH. Positions 208-219 are enriched in basic residues; that stretch reads ENIKRRTGFRVI. Residues 230-243 are compositionally biased toward polar residues; it reads ENSVAESKKPTQSA. Residues 447–616 enclose the tr-type G domain; the sequence is ERPPVVTIMG…LIQADIMELK (170 aa). Residues 456 to 463 form a G1 region; sequence GHVDHGKT. 456–463 serves as a coordination point for GTP; it reads GHVDHGKT. Residues 481 to 485 form a G2 region; sequence GITQH. A G3 region spans residues 502-505; sequence DTPG. Residues 502–506 and 556–559 contribute to the GTP site; these read DTPGH and NKMD. The interval 556-559 is G4; that stretch reads NKMD. The interval 592–594 is G5; it reads SAK.

The protein belongs to the TRAFAC class translation factor GTPase superfamily. Classic translation factor GTPase family. IF-2 subfamily.

The protein localises to the cytoplasm. Its function is as follows. One of the essential components for the initiation of protein synthesis. Protects formylmethionyl-tRNA from spontaneous hydrolysis and promotes its binding to the 30S ribosomal subunits. Also involved in the hydrolysis of GTP during the formation of the 70S ribosomal complex. This Helicobacter pylori (strain Shi470) protein is Translation initiation factor IF-2.